Here is a 209-residue protein sequence, read N- to C-terminus: MVQFITIPTPIDYQDSLMLMEDYVNKVIDGEAPEAVYLVEHLDVYTAGTNYKQEELLNHNNIPVIYTGRGGKFTFHGAGQRVIYPILNLALPNRTKDLKLYVRMLEEWIINSLDIFGIKAYIIKNKVGIWVKTNDDIPSKIAAIGVRVRKWVTYHGIAINISTDLSKFNGIIPCGLENSLVTSLNQLGVYIEMTEFDKILEVEFIKIFK.

A BPL/LPL catalytic domain is found at 30 to 209 (GEAPEAVYLV…LEVEFIKIFK (180 aa)). Substrate is bound by residues 69–76 (RGGKFTFH), 143–145 (AIG), and 156–158 (GIA). C174 serves as the catalytic Acyl-thioester intermediate.

The protein belongs to the LipB family.

The protein localises to the cytoplasm. It carries out the reaction octanoyl-[ACP] + L-lysyl-[protein] = N(6)-octanoyl-L-lysyl-[protein] + holo-[ACP] + H(+). The protein operates within protein modification; protein lipoylation via endogenous pathway; protein N(6)-(lipoyl)lysine from octanoyl-[acyl-carrier-protein]: step 1/2. Catalyzes the transfer of endogenously produced octanoic acid from octanoyl-acyl-carrier-protein onto the lipoyl domains of lipoate-dependent enzymes. Lipoyl-ACP can also act as a substrate although octanoyl-ACP is likely to be the physiological substrate. The chain is Octanoyltransferase from Rickettsia bellii (strain OSU 85-389).